The following is a 97-amino-acid chain: MNLSTKQKQHLKGLAHPLKPVVLLGSNGLTEGVLAEIEQALEHHELIKVKIATEDRETKTLIVEAIVRETGACNVQVIGKTLVLYRPTKERKISLPR.

Positions 1–97 (MNLSTKQKQH…TKERKISLPR (97 aa)) constitute a CRM domain.

This chain is RNA-binding protein YhbY (yhbY), found in Escherichia coli O157:H7.